A 363-amino-acid chain; its full sequence is Glutamate 5-kinase (363 aa).

Lys-3 is an ATP binding site. Positions 43, 128, and 140 each coordinate substrate. Residues Thr-160–Asp-161 and Thr-202–Lys-208 each bind ATP. The region spanning Ala-267–Ser-349 is the PUA domain.

It belongs to the glutamate 5-kinase family.

It localises to the cytoplasm. It carries out the reaction L-glutamate + ATP = L-glutamyl 5-phosphate + ADP. It participates in amino-acid biosynthesis; L-proline biosynthesis; L-glutamate 5-semialdehyde from L-glutamate: step 1/2. Its function is as follows. Catalyzes the transfer of a phosphate group to glutamate to form L-glutamate 5-phosphate. This Xanthomonas axonopodis pv. citri (strain 306) protein is Glutamate 5-kinase.